Here is a 123-residue protein sequence, read N- to C-terminus: MIQEQTMLNVADNSGARRVMCIKVLGGSHRRYAHVGDIIKVTIKEAIPRGKVKKGDVLKAVVVRTRKGVRRPDGSVIRFDGNACVLLNNTSEQVIGTRIFGPVTRELRNEKFMKIISLAPEVL.

This sequence belongs to the universal ribosomal protein uL14 family. In terms of assembly, part of the 50S ribosomal subunit. Forms a cluster with proteins L3 and L19. In the 70S ribosome, L14 and L19 interact and together make contacts with the 16S rRNA in bridges B5 and B8.

Functionally, binds to 23S rRNA. Forms part of two intersubunit bridges in the 70S ribosome. In Photorhabdus laumondii subsp. laumondii (strain DSM 15139 / CIP 105565 / TT01) (Photorhabdus luminescens subsp. laumondii), this protein is Large ribosomal subunit protein uL14.